The sequence spans 432 residues: Small ribosomal subunit protein uS5m (432 aa).

The tract at residues A110 to R130 is disordered. The span at R113–D127 shows a compositional bias: basic residues. In terms of domain architecture, S5 DRBM spans F220–I284.

Belongs to the universal ribosomal protein uS5 family. In terms of assembly, component of the mitochondrial ribosome small subunit (28S) which comprises a 12S rRNA and about 30 distinct proteins.

The protein resides in the mitochondrion. This is Small ribosomal subunit protein uS5m (Mrps5) from Mus musculus (Mouse).